We begin with the raw amino-acid sequence, 394 residues long: MNFEFGAKRRDPYAWLEQSLATIHRADWYRSVQPINGRPGATVVLAGQEVINFASNDYLGLAGDKRLMAAATAAIAEFGTGSTGSRLLSGHRELHRELEKAIASTKQTEDALVFSSGYLANLGAITALVGKRDLILSDQYNHSSLKNGAILSGAAVVEYPHCDVAVLKTQLSQQRQNYRRCLILTDTVFSMDGDLCPLPALFDLADEFSCMLLVDEAHATGVLGKTGAGCVEYFGCTGKQLIQIGTLSKALGSLGGYVAGSSALIDFLRNRAPSWIYTTGLSPADTAAALAAIKIVQQEPQHLAQLWRNIHYLKTLLQQLPNLKLLPSESPILCFQLPNATDALKAGKQLRDAGIFAPAIRPPTVPTSRIRISVMATHKVAHIEKLVAALKDVI.

R30 contributes to the substrate binding site. 117 to 118 (GY) contacts pyridoxal 5'-phosphate. H142 serves as a coordination point for substrate. Residues S190, 215–218 (DEAH), and 246–249 (TLSK) each bind pyridoxal 5'-phosphate. K249 bears the N6-(pyridoxal phosphate)lysine mark. T364 provides a ligand contact to substrate.

It belongs to the class-II pyridoxal-phosphate-dependent aminotransferase family. BioF subfamily. As to quaternary structure, homodimer. Pyridoxal 5'-phosphate serves as cofactor.

It carries out the reaction 6-carboxyhexanoyl-[ACP] + L-alanine + H(+) = (8S)-8-amino-7-oxononanoate + holo-[ACP] + CO2. It functions in the pathway cofactor biosynthesis; biotin biosynthesis. Its function is as follows. Catalyzes the decarboxylative condensation of pimeloyl-[acyl-carrier protein] and L-alanine to produce 8-amino-7-oxononanoate (AON), [acyl-carrier protein], and carbon dioxide. The chain is Putative 8-amino-7-oxononanoate synthase (bioF) from Nostoc punctiforme (strain ATCC 29133 / PCC 73102).